The sequence spans 767 residues: DNA topoisomerase 1 (767 aa).

The span at 1-23 shows a compositional bias: basic and acidic residues; sequence MSGDHLHNDSQIEADFRLNDSHK. A disordered region spans residues 1–201; sequence MSGDHLHNDS…NKKKKPKKEE (201 aa). Serine 2 bears the N-acetylserine mark. 2 positions are modified to phosphoserine: serine 2 and serine 10. Residues 24 to 39 are compositionally biased toward basic residues; it reads HKDKHKDREHRHKEHK. Residues 40-110 show a composition bias toward basic and acidic residues; it reads KDKDKDREKS…DAKIKKEKEN (71 aa). Serine 59 is modified (phosphoserine). Lysine 103 participates in a covalent cross-link: Glycyl lysine isopeptide (Lys-Gly) (interchain with G-Cter in SUMO2). Lysine 105 participates in a covalent cross-link: Glycyl lysine isopeptide (Lys-Gly) (interchain with G-Cter in SUMO); alternate. Residue lysine 105 forms a Glycyl lysine isopeptide (Lys-Gly) (interchain with G-Cter in SUMO2); alternate linkage. A Phosphoserine modification is found at serine 114. Residue lysine 119 forms a Glycyl lysine isopeptide (Lys-Gly) (interchain with G-Cter in SUMO); alternate linkage. Lysine 119 is covalently cross-linked (Glycyl lysine isopeptide (Lys-Gly) (interchain with G-Cter in SUMO2); alternate). Residue lysine 119 forms a Glycyl lysine isopeptide (Lys-Gly) (interchain with G-Cter in SUMO1); alternate linkage. Positions 131–168 are enriched in basic and acidic residues; the sequence is PKEDIKPLKRLRDEDDADYKPKKIKTEDIKKEKKRKSE. Residues lysine 136 and lysine 150 each participate in a glycyl lysine isopeptide (Lys-Gly) (interchain with G-Cter in SUMO2) cross-link. Lysine 155 participates in a covalent cross-link: Glycyl lysine isopeptide (Lys-Gly) (interchain with G-Cter in SUMO); alternate. Lysine 155 is covalently cross-linked (Glycyl lysine isopeptide (Lys-Gly) (interchain with G-Cter in SUMO2); alternate). Glycyl lysine isopeptide (Lys-Gly) (interchain with G-Cter in SUMO2) cross-links involve residues lysine 160 and lysine 166. A Glycyl lysine isopeptide (Lys-Gly) (interchain with G-Cter in SUMO2); alternate cross-link involves residue lysine 174. Lysine 174 is modified (N6-acetyllysine; alternate). Basic and acidic residues predominate over residues 181–201; sequence KDKDKKVAEPDNKKKKPKKEE. Residue lysine 206 forms a Glycyl lysine isopeptide (Lys-Gly) (interchain with G-Cter in SUMO2) linkage. Lysine 282 carries the post-translational modification N6-acetyllysine. Residue lysine 338 forms a Glycyl lysine isopeptide (Lys-Gly) (interchain with G-Cter in SUMO2) linkage. 2 interaction with DNA regions span residues 427-428 and 490-495; these read KY and RAGNEK. Residues 434–767 form the Topo IB-type catalytic domain; the sequence is SSRIKGEKDW…IDMTDEDYEF (334 aa). The residue at position 508 (serine 508) is a Phosphoserine; by CK2. Residue lysine 551 forms a Glycyl lysine isopeptide (Lys-Gly) (interchain with G-Cter in SUMO2) linkage. The segment at 587-589 is interaction with DNA; the sequence is TAK. Residues lysine 644, lysine 702, and lysine 714 each participate in a glycyl lysine isopeptide (Lys-Gly) (interchain with G-Cter in SUMO2) cross-link. Residue tyrosine 725 is the O-(3'-phospho-DNA)-tyrosine intermediate of the active site.

The protein belongs to the type IB topoisomerase family. In terms of assembly, monomer. Interacts with ERCC6. Interacts with TPRN; TPRN interacts with a number of DNA damage response proteins, is recruited to sites of DNA damage and may play a role in DNA damage repair. Sumoylated. Lys-119 is the main site of sumoylation. Sumoylation plays a role in partitioning TOP1 between nucleoli and nucleoplasm. Levels are dramatically increased on camptothecin (CPT) treatment. Post-translationally, phosphorylation at Ser-508 by CK2 increases binding to supercoiled DNA and sensitivity to camptothecin.

The protein localises to the nucleus. The protein resides in the nucleolus. It localises to the nucleoplasm. The catalysed reaction is ATP-independent breakage of single-stranded DNA, followed by passage and rejoining.. In terms of biological role, releases the supercoiling and torsional tension of DNA introduced during the DNA replication and transcription by transiently cleaving and rejoining one strand of the DNA duplex. Introduces a single-strand break via transesterification at a target site in duplex DNA. The scissile phosphodiester is attacked by the catalytic tyrosine of the enzyme, resulting in the formation of a DNA-(3'-phosphotyrosyl)-enzyme intermediate and the expulsion of a 5'-OH DNA strand. The free DNA strand then rotates around the intact phosphodiester bond on the opposing strand, thus removing DNA supercoils. Finally, in the religation step, the DNA 5'-OH attacks the covalent intermediate to expel the active-site tyrosine and restore the DNA phosphodiester backbone. Regulates the alternative splicing of tissue factor (F3) pre-mRNA in endothelial cells. Involved in the circadian transcription of the core circadian clock component BMAL1 by altering the chromatin structure around the ROR response elements (ROREs) on the BMAL1 promoter. The protein is DNA topoisomerase 1 (Top1) of Mus musculus (Mouse).